A 64-amino-acid polypeptide reads, in one-letter code: UPF0370 protein YE1145 (64 aa).

Residues 3 to 23 (WLADYWWVVLIILVGMILNGI) traverse the membrane as a helical segment. Residues 36–64 (SNKPEIPPHRDNNAQWDDDDDWPDKDKKK) are disordered.

This sequence belongs to the UPF0370 family.

It localises to the cell membrane. The protein is UPF0370 protein YE1145 of Yersinia enterocolitica serotype O:8 / biotype 1B (strain NCTC 13174 / 8081).